Reading from the N-terminus, the 92-residue chain is PqqA binding protein (92 aa).

This sequence belongs to the PqqD family. In terms of assembly, monomer. Interacts with PqqE.

It participates in cofactor biosynthesis; pyrroloquinoline quinone biosynthesis. Functions as a PqqA binding protein and presents PqqA to PqqE, in the pyrroloquinoline quinone (PQQ) biosynthetic pathway. This chain is PqqA binding protein, found in Xanthomonas oryzae pv. oryzae (strain MAFF 311018).